The primary structure comprises 139 residues: Non-structural protein 1 (139 aa).

The DLNP; interaction with MAP1B signature appears at 136–139 (DLNP).

This sequence belongs to the pneumovirus non-structural protein 1 family. In terms of assembly, monomer. Homomultimer. Heteromultimer with NS2. Interacts with the matrix protein M. Interacts with host ELOC and CUL2; this interaction allows NS1 to form an active E3 ligase with ELOC and CUL2. Interacts with host IRF3; this interaction leads to the disrupted association of IRF3 with CREBBP and thus reduced binding of IRF3 to the IFN-beta promoter. Interacts with host MAVS; this interaction prevents MAVS binding to RIGI and inhibits signaling pathway leading to interferon production. Interacts with host MAP1B/microtubule-associated protein 1B. Interacts with host TRIM25 (via SPRY domain); this interaction suppresses RIGI ubiquitination and results in decreased interaction between RIGI and MAVS.

The protein resides in the host cytoplasm. Its subcellular location is the host mitochondrion. It localises to the host nucleus. Its function is as follows. Plays a major role in antagonizing the type I IFN-mediated antiviral response by degrading or inhibiting multiple cellular factors required for either IFN induction or response pathways. Acts cooperatively with NS2 to repress activation and nuclear translocation of host IFN-regulatory factor IRF3. Also disrupts the association of IRF3 with CREBBP. Interacts with host mitochondrial-associated membrane (MAM) MAVS and prevents the interaction with RIGI. Interacts with TRIM25 to suppress TRIM25-mediated RIGI ubiquitination and thereby RIGI-MAVS interaction. Together with NS2, participates in the proteasomal degradation of host STAT2, IRF3, IRF7, TBK1 and RIGI through a NS-degradasome involving CUL2 and Elongin-C. The degradasome requires an intact mitochondrial MAVS. Decreases the levels of host TRAF3 and IKBKE/IKK-epsilon. As functions other than disruptions of the type I IFN-mediated antiviral signaling pathways, induces host SOCS1 and SOCS3 expression. Suppresses premature apoptosis by an NF-kappa-B-dependent, interferon-independent mechanism and thus facilitates virus growth. Additionally, NS1 may serve some inhibitory role in viral transcription and RNA replication. Suppresses proliferation and activation of host CD103+ CD8+ cytotoxic T-lymphocytes and Th17 helper T-lymphocytes. This chain is Non-structural protein 1 (1C), found in Homo sapiens (Human).